Reading from the N-terminus, the 84-residue chain is Delta-conotoxin-like MVIA (84 aa).

The first 22 residues, 1-22 (MKLTCVMIVAVLFLTTWTFVTA), serve as a signal peptide directing secretion. Residues 23-49 (DDSRYGLKNLFPKARHEMKNPEASKLN) constitute a propeptide that is removed on maturation. 3 disulfide bridges follow: C54–C69, C61–C73, and C68–C77. P65 is subject to 4-hydroxyproline. S83 carries the serine amide modification.

This sequence belongs to the conotoxin O1 superfamily. In terms of tissue distribution, expressed by the venom duct.

It localises to the secreted. Delta-conotoxins bind to site 6 of voltage-gated sodium channels (Nav) and inhibit the inactivation process. The chain is Delta-conotoxin-like MVIA from Conus magus (Magical cone).